A 679-amino-acid polypeptide reads, in one-letter code: Transketolase 10 (679 aa).

Residue His-40 participates in substrate binding. Thiamine diphosphate-binding positions include His-80 and 129–131 (GPL). Asp-170 serves as a coordination point for Mg(2+). Thiamine diphosphate-binding residues include Gly-171 and Asn-200. 2 residues coordinate Mg(2+): Asn-200 and Ile-202. The substrate site is built by His-277, Arg-371, and Ser-398. A thiamine diphosphate-binding site is contributed by His-277. Thiamine diphosphate contacts are provided by Glu-425 and Phe-452. Glu-425 serves as the catalytic Proton donor. 3 residues coordinate substrate: His-476, Asp-484, and Arg-535.

It belongs to the transketolase family. As to quaternary structure, homodimer. Mg(2+) serves as cofactor. The cofactor is Ca(2+). Mn(2+) is required as a cofactor. It depends on Co(2+) as a cofactor. Requires thiamine diphosphate as cofactor. Leaves.

It catalyses the reaction D-sedoheptulose 7-phosphate + D-glyceraldehyde 3-phosphate = aldehydo-D-ribose 5-phosphate + D-xylulose 5-phosphate. In terms of biological role, could be involved in the conversion of sugars, which are a major phenomenon in the rehydration process. Catalyzes the transfer of a two-carbon ketol group from a ketose donor to an aldose acceptor, via a covalent intermediate with the cofactor thiamine pyrophosphate. The sequence is that of Transketolase 10 (TKT10) from Craterostigma plantagineum (Blue gem).